The chain runs to 379 residues: Guanine nucleotide-binding protein G(s) subunit alpha (379 aa).

Residues 38 to 379 (STHRLLLLGA…RMHLRQYELL (342 aa)) form the G-alpha domain. Residues 41–54 (RLLLLGAGESGKST) are G1 motif. GTP-binding positions include 46 to 53 (GAGESGKS), 182 to 188 (LRCRVLT), 207 to 211 (DVGGQ), 276 to 279 (NKQD), and Ala-351. 2 residues coordinate Mg(2+): Ser-53 and Thr-188. The interval 180–188 (DILRCRVLT) is G2 motif. Residues 203–212 (FHMFDVGGQR) are G3 motif. The segment at 272–279 (ILFLNKQD) is G4 motif. Residues 349 to 354 (TCAVDT) are G5 motif.

Belongs to the G-alpha family. G(s) subfamily. In terms of assembly, g proteins are composed of 3 units; alpha, beta and gamma. The alpha chain contains the guanine nucleotide binding site.

Guanine nucleotide-binding proteins (G proteins) are involved as modulators or transducers in various transmembrane signaling systems. The G(s) protein is involved in hormonal regulation of adenylate cyclase: it activates the cyclase in response to beta-adrenergic stimuli. This chain is Guanine nucleotide-binding protein G(s) subunit alpha, found in Schistosoma mansoni (Blood fluke).